Here is an 806-residue protein sequence, read N- to C-terminus: U4/U6.U5 tri-snRNP-associated protein 1 (806 aa).

A disordered region spans residues 1–121; sequence MGSSKKHRGE…SGDASSLSIE (121 aa). The span at 32–42 shows a compositional bias: basic residues; the sequence is HREHKKHKHRS. The segment covering 58–101 has biased composition (basic and acidic residues); that stretch reads ERGSERGSGRRGAEAEARSGAHGRERSQAEPSERRVKREKRDDG. Residues 104–119 are compositionally biased toward low complexity; that stretch reads AAASSKASSGDASSLS. Residues Lys-125 and Lys-133 each participate in a glycyl lysine isopeptide (Lys-Gly) (interchain with G-Cter in SUMO2) cross-link. A Glycyl lysine isopeptide (Lys-Gly) (interchain with G-Cter in SUMO1); alternate cross-link involves residue Lys-141. Lys-141 participates in a covalent cross-link: Glycyl lysine isopeptide (Lys-Gly) (interchain with G-Cter in SUMO2); alternate. Glycyl lysine isopeptide (Lys-Gly) (interchain with G-Cter in SUMO2) cross-links involve residues Lys-147 and Lys-188. Residues 157 to 231 are a coiled coil; that stretch reads NPMALRQREE…KLLEEMDQEF (75 aa). Thr-189 is subject to Phosphothreonine. A Glycyl lysine isopeptide (Lys-Gly) (interchain with G-Cter in SUMO2) cross-link involves residue Lys-277. Ser-321 is modified (phosphoserine). Residues Lys-329 and Lys-336 each participate in a glycyl lysine isopeptide (Lys-Gly) (interchain with G-Cter in SUMO2) cross-link. Ser-348 bears the Phosphoserine mark. Glycyl lysine isopeptide (Lys-Gly) (interchain with G-Cter in SUMO2) cross-links involve residues Lys-400 and Lys-414. The segment at 418-504 is disordered; the sequence is MRADDLLPLG…GLEEDEAELE (87 aa). Position 430 is a phosphothreonine (Thr-430). The segment covering 450 to 460 has biased composition (acidic residues); it reads VEEEALEDEEK. Phosphoserine is present on residues Ser-480, Ser-492, and Ser-527. A coiled-coil region spans residues 494 to 540; that stretch reads EGLEEDEAELELQKQLEKGRRLRQLQQLQQLRDSGEKVLEIVKKLES. Lys-554 participates in a covalent cross-link: Glycyl lysine isopeptide (Lys-Gly) (interchain with G-Cter in SUMO2). The tract at residues 578 to 610 is disordered; it reads AGNREEQEELMDFERDEERSANGGSESDGEENI. 4 positions are modified to phosphoserine: Ser-597, Ser-602, Ser-604, and Ser-627. Glycyl lysine isopeptide (Lys-Gly) (interchain with G-Cter in SUMO2) cross-links involve residues Lys-654, Lys-663, and Lys-690. At Thr-701 the chain carries Phosphothreonine. Glycyl lysine isopeptide (Lys-Gly) (interchain with G-Cter in SUMO2) cross-links involve residues Lys-705, Lys-715, Lys-729, Lys-755, and Lys-764. A Phosphoserine modification is found at Ser-767. Thr-770 bears the Phosphothreonine mark. Residues Lys-781 and Lys-786 each participate in a glycyl lysine isopeptide (Lys-Gly) (interchain with G-Cter in SUMO2) cross-link. At Ser-795 the chain carries Phosphoserine. Lys-797 participates in a covalent cross-link: Glycyl lysine isopeptide (Lys-Gly) (interchain with G-Cter in SUMO2).

The protein belongs to the SNU66/SART1 family. As to quaternary structure, identified in the spliceosome C complex. Component of the U4/U6-U5 tri-snRNP complex composed of the U4, U6 and U5 snRNAs and at least PRPF3, PRPF4, PRPF6, PRPF8, PRPF31, SNRNP200, TXNL4A, SNRNP40, DDX23, CD2BP2, PPIH, SNU13, EFTUD2, SART1 and USP39. Interacts with UBL5. Interacts with IVNS1ABP (via Kelch repeats). In terms of processing, sumoylated with SUMO2. As to expression, ubiquitously expressed. Shows a high expression in fetal liver and a low expression in adult liver.

It is found in the nucleus. Its function is as follows. Plays a role in mRNA splicing as a component of the U4/U6-U5 tri-snRNP, one of the building blocks of the spliceosome. May also bind to DNA. The chain is U4/U6.U5 tri-snRNP-associated protein 1 (Sart1) from Mus musculus (Mouse).